The primary structure comprises 3291 residues: Protocadherin-16 (3291 aa).

A signal peptide spans 1-35 (MQEELSVALSCPGMKSLGTLLPLLVLLGTTVPGIR). The Extracellular segment spans residues 36–2933 (GQAGSLDLQI…PDLNLLLVGA (2898 aa)). 27 Cadherin domains span residues 37-137 (QAGS…APAF), 138-249 (PQAR…APAF), 250-356 (NQSR…QPSM), 369-466 (VSEA…APAF), 476-572 (LPEV…EPQF), 573-679 (QRTF…PPQF), 680-784 (YPRE…PPIF), 785-888 (EQLQ…SPAF), 889-994 (PAPE…APRF), 995-1105 (DSPT…EPTF), 1100-1205 (SEEP…SPTF), 1218-1317 (IQVP…SPDL), 1326-1429 (VPVV…APAF), 1430-1539 (ARDP…APVF), 1539-1642 (FASP…APAF), 1643-1744 (PQQE…SPTF), 1745-1848 (GNTH…APAF), 1849-1953 (PVPS…APAF), 1976-2061 (LATL…GPRF), 2062-2164 (PRAN…APRF), 2165-2270 (LQPH…RPTI), 2270-2369 (IPQP…VPIF), 2370-2475 (SQSL…APSF), 2476-2595 (TLPH…PPVF), 2596-2699 (TRAS…GPAF), 2700-2806 (PLSL…DPVF), and 2807-2926 (LAPS…APDL). N-linked (GlcNAc...) asparagine glycosylation occurs at Asn396. The interval 951–971 (GPPGGPPHELEVEAQDGGSPP) is disordered. Residue Asn1711 is glycosylated (N-linked (GlcNAc...) asparagine). A glycan (N-linked (GlcNAc...) asparagine) is linked at Asn2354. A glycan (N-linked (GlcNAc...) asparagine) is linked at Asn2562. A helical membrane pass occupies residues 2934–2954 (VAASLGVVVVLALAALVLGLV). Topologically, residues 2955 to 3291 (RARSRKAEAA…EPPDDTELRI (337 aa)) are cytoplasmic. A disordered region spans residues 2978-3033 (SLQKLGREPPSPPPSEHLYHQTLPSYGGPGAGGPYPRGGSLDPSHSSGRGSAEAAE). Residues 3004–3013 (GGPGAGGPYP) are compositionally biased toward gly residues. Phosphoserine is present on Ser3048. Disordered stretches follow at residues 3051–3080 (SSLA…PAPD) and 3226–3291 (ASHR…ELRI). A compositionally biased stretch (low complexity) spans 3237–3259 (SLSSAAMSPSFSPSLSPLAARSP). Residues 3270-3279 (PSASALSTES) show a composition bias toward polar residues.

In terms of assembly, heterophilic interaction with FAT4; this interaction affects their respective protein levels.

The protein localises to the cell membrane. In terms of biological role, calcium-dependent cell-adhesion protein. Mediates functions in neuroprogenitor cell proliferation and differentiation. This is Protocadherin-16 (Dchs1) from Rattus norvegicus (Rat).